The sequence spans 800 residues: DNA topoisomerase 4 subunit A (800 aa).

The region spanning 31-495 (LPDVRDGLKP…EIEEIKIDKE (465 aa)) is the Topo IIA-type catalytic domain. Residue Tyr119 is the O-(5'-phospho-DNA)-tyrosine intermediate of the active site.

It belongs to the type II topoisomerase GyrA/ParC subunit family. ParC type 2 subfamily. As to quaternary structure, heterotetramer composed of ParC and ParE.

It is found in the cell membrane. It carries out the reaction ATP-dependent breakage, passage and rejoining of double-stranded DNA.. In terms of biological role, topoisomerase IV is essential for chromosome segregation. It relaxes supercoiled DNA. Performs the decatenation events required during the replication of a circular DNA molecule. This is DNA topoisomerase 4 subunit A from Staphylococcus aureus (strain NCTC 8325 / PS 47).